A 237-amino-acid polypeptide reads, in one-letter code: DCN1-like protein 5 (237 aa).

Residues S9, S41, and S48 each carry the phosphoserine modification. Residues 46–232 enclose the DCUN1 domain; that stretch reads FSSKKCLAWF…LLDEFVEWQK (187 aa).

In terms of assembly, part of a complex that contains DCUN1D5, CUL1 and RBX1; this interaction is bridged by CUL1. Interacts (via the DCUN1 domain) with the unneddylated cullins: interacts with CUL1, CUL2, CUL3, CUL4A, CUL4B and CUL5; these interactions promote the cullin neddylation and the identity of the cullin dictates the affinity of the interaction. Interacts (via DCUN1 domain) with UBE2M (N-terminally acetylated form) and probably with UBE2F (N-terminally acetylated form). May also interact with regulators or subunits of cullin-RING ligases such as RBX1, RNF7, ELOB and DDB1; these interactions are bridged by cullins. Interacts with CAND1; this interaction is bridged by cullins and strongly inhibits the neddylation of cullins. These CAND-cullin-DCNL complexes can only be neddylated in the presence of a substrate adapter. Phosphorylation at Ser-41 is independent of cullin's interaction. Phosphorylated in response to both TICAM1 and MYD88 dependent Toll-like receptor (TLR) pathway activation. Phosphorylated in response to IL1B stimulation. In terms of tissue distribution, weakly expressed in testis, skin and immune tissues (thymus, spleen and lymph nodes).

It is found in the nucleus. It localises to the cytoplasm. Its subcellular location is the cytoskeleton. The protein resides in the spindle. Contributes to the neddylation of all cullins by transferring NEDD8 from N-terminally acetylated NEDD8-conjugating E2s enzyme to different cullin C-terminal domain-RBX complexes which is necessary for the activation of cullin-RING E3 ubiquitin ligases (CRLs). May play a role in DNA damage response and may participate in cell proliferation and anchorage-independent cell growth. The sequence is that of DCN1-like protein 5 from Homo sapiens (Human).